Reading from the N-terminus, the 33-residue chain is uncharacterized protein (33 aa).

The Cytoplasmic portion of the chain corresponds to 1 to 12 (MKENKVQQISHK). Residues 13–33 (LINIVVFVAIVEYAYLFLHFY) traverse the membrane as a helical segment.

Its subcellular location is the cell inner membrane. This is an uncharacterized protein from Escherichia coli (strain K12).